A 204-amino-acid polypeptide reads, in one-letter code: Somatotropin (204 aa).

An N-terminal signal peptide occupies residues 1–17 (MDRVLLLLSVLTLGVSS). A Pyrrolidone carboxylic acid modification is found at Q18. Residue H36 participates in Zn(2+) binding. C69 and C177 are disulfide-bonded. E186 contacts Zn(2+). An intrachain disulfide couples C194 to C202.

The protein belongs to the somatotropin/prolactin family.

It localises to the secreted. Functionally, growth hormone plays an important role in growth control and is involved in the regulation of several anabolic processes. Implicated as an osmoregulatory substance important for seawater adaptation. The sequence is that of Somatotropin (gh) from Larimichthys crocea (Large yellow croaker).